The chain runs to 1119 residues: Translation initiation factor IF-2 (1119 aa).

Disordered regions lie at residues 64 to 463 (SIKK…TSGY) and 477 to 507 (RPKKEKSDESKSQKTIKQFKKKKKETTRQRQ). The segment covering 70–102 (IKKDNYKQNKEDKSSLISSVEEKPFKDNPEKKP) has biased composition (basic and acidic residues). Composition is skewed to polar residues over residues 116–153 (IISNQPKSLNKPTITNSSQSQANLTNQNLNSKTSQNLN) and 182–212 (KNTTKNVQSNESSQNILNSGGGRQISNKPDQ). Residues 213-224 (NSSKSKTKNINN) are compositionally biased toward low complexity. 4 stretches are compositionally biased toward polar residues: residues 242 to 257 (NKQNNKQKTSFKQTVP), 281 to 297 (FNRQTNTNRPGAPSSNK), 319 to 328 (FNRQVNTNRS), and 375 to 387 (QVINNNEKQNSET). The segment covering 421-435 (GKTDWDDSAKLEALR) has biased composition (basic and acidic residues). Residues 493 to 507 (KQFKKKKKETTRQRQ) show a composition bias toward basic residues. In terms of domain architecture, tr-type G spans 610-782 (KRPPVITVMG…ILLVSEVEDL (173 aa)). The interval 619–626 (GHVDHGKT) is G1. GTP is bound at residue 619–626 (GHVDHGKT). The segment at 644 to 648 (GITQH) is G2. The G3 stretch occupies residues 669–672 (DTPG). GTP is bound by residues 669-673 (DTPGH) and 723-726 (NKID). Residues 723–726 (NKID) form a G4 region. The interval 759–761 (SAI) is G5.

Belongs to the TRAFAC class translation factor GTPase superfamily. Classic translation factor GTPase family. IF-2 subfamily.

It is found in the cytoplasm. Its function is as follows. One of the essential components for the initiation of protein synthesis. Protects formylmethionyl-tRNA from spontaneous hydrolysis and promotes its binding to the 30S ribosomal subunits. Also involved in the hydrolysis of GTP during the formation of the 70S ribosomal complex. The chain is Translation initiation factor IF-2 from Prochlorococcus marinus (strain MIT 9215).